The primary structure comprises 356 residues: Branched-chain-amino-acid transaminase 1 (356 aa).

N6-(pyridoxal phosphate)lysine is present on lysine 197.

The protein belongs to the class-IV pyridoxal-phosphate-dependent aminotransferase family. It depends on pyridoxal 5'-phosphate as a cofactor.

The catalysed reaction is L-leucine + 2-oxoglutarate = 4-methyl-2-oxopentanoate + L-glutamate. It carries out the reaction L-isoleucine + 2-oxoglutarate = (S)-3-methyl-2-oxopentanoate + L-glutamate. It catalyses the reaction L-valine + 2-oxoglutarate = 3-methyl-2-oxobutanoate + L-glutamate. It functions in the pathway amino-acid biosynthesis; L-isoleucine biosynthesis; L-isoleucine from 2-oxobutanoate: step 4/4. Its pathway is amino-acid biosynthesis; L-leucine biosynthesis; L-leucine from 3-methyl-2-oxobutanoate: step 4/4. The protein operates within amino-acid biosynthesis; L-valine biosynthesis; L-valine from pyruvate: step 4/4. Its activity is regulated as follows. Inhibited by canaline. Functionally, transaminates branched-chain amino acids and ketoglutarate. Involved in the final step of the methionine regeneration pathway, where ketomethiobutyrate (KMTB) is converted to methionine via a transamination. The amino donor preference is isoleucine, leucine, valine, phenylalanine, and tyrosine. This chain is Branched-chain-amino-acid transaminase 1 (ilvE), found in Bacillus subtilis (strain 168).